Consider the following 209-residue polypeptide: 8-oxoguanine DNA glycosylase/AP lyase (209 aa).

Residues lysine 131 and aspartate 149 contribute to the active site.

Belongs to the type-2 OGG1 family.

It catalyses the reaction 2'-deoxyribonucleotide-(2'-deoxyribose 5'-phosphate)-2'-deoxyribonucleotide-DNA = a 3'-end 2'-deoxyribonucleotide-(2,3-dehydro-2,3-deoxyribose 5'-phosphate)-DNA + a 5'-end 5'-phospho-2'-deoxyribonucleoside-DNA + H(+). In terms of biological role, catalyzes the excision of an oxidatively damaged form of guanine (7,8-dihydro-8-oxoguanine = 8-oxoG) from DNA. Also cleaves the DNA backbone at apurinic/apyrimidinic sites (AP sites). The chain is 8-oxoguanine DNA glycosylase/AP lyase from Korarchaeum cryptofilum (strain OPF8).